A 209-amino-acid polypeptide reads, in one-letter code: Small ribosomal subunit protein uS4 (209 aa).

The S4 RNA-binding domain occupies 99-160 (RRLDNVVYRL…GSKEMTLLGQ (62 aa)).

This sequence belongs to the universal ribosomal protein uS4 family. Part of the 30S ribosomal subunit. Contacts protein S5. The interaction surface between S4 and S5 is involved in control of translational fidelity.

In terms of biological role, one of the primary rRNA binding proteins, it binds directly to 16S rRNA where it nucleates assembly of the body of the 30S subunit. Its function is as follows. With S5 and S12 plays an important role in translational accuracy. The polypeptide is Small ribosomal subunit protein uS4 (Koribacter versatilis (strain Ellin345)).